The sequence spans 602 residues: Threonine--tRNA ligase (602 aa).

Residues 208 to 499 form a catalytic region; that stretch reads DHRKLGIELK…LTEHCAGEFP (292 aa). Residues Cys300, His351, and His476 each contribute to the Zn(2+) site.

It belongs to the class-II aminoacyl-tRNA synthetase family. Homodimer. Zn(2+) serves as cofactor.

Its subcellular location is the cytoplasm. It catalyses the reaction tRNA(Thr) + L-threonine + ATP = L-threonyl-tRNA(Thr) + AMP + diphosphate + H(+). In terms of biological role, catalyzes the attachment of threonine to tRNA(Thr) in a two-step reaction: L-threonine is first activated by ATP to form Thr-AMP and then transferred to the acceptor end of tRNA(Thr). Also edits incorrectly charged L-seryl-tRNA(Thr). The polypeptide is Threonine--tRNA ligase (Campylobacter jejuni subsp. doylei (strain ATCC BAA-1458 / RM4099 / 269.97)).